A 289-amino-acid chain; its full sequence is ATP synthase mitochondrial F1 complex assembly factor 2 (289 aa).

A mitochondrion-targeting transit peptide spans 1 to 40 (MWRSCLRLRDGGRRLLNRPAGGPSASMSPGPTIPSPARAY). Positions 13 to 40 (RRLLNRPAGGPSASMSPGPTIPSPARAY) are disordered. N6-succinyllysine is present on lysine 133.

The protein belongs to the ATP12 family. As to quaternary structure, interacts with ATP5F1B; involved in the assembly of the F1 component of the mitochondrial ATP synthase (ATPase). Interacts with FMC1. In terms of tissue distribution, widely expressed.

It is found in the mitochondrion inner membrane. Functionally, plays a role in the assembly of the F1 component of the mitochondrial ATP synthase (ATPase). The sequence is that of ATP synthase mitochondrial F1 complex assembly factor 2 from Homo sapiens (Human).